Here is a 56-residue protein sequence, read N- to C-terminus: MAKKGSGLLVKLVSSEGTGYFYVKKRDPKKLVEKLSFRKYDPVARKHVLFKEEKLR.

Belongs to the bacterial ribosomal protein bL33 family.

In Anaplasma marginale (strain Florida), this protein is Large ribosomal subunit protein bL33.